Consider the following 345-residue polypeptide: L-threonine 3-dehydrogenase (345 aa).

Cysteine 38 is a binding site for Zn(2+). Active-site charge relay system residues include threonine 40 and histidine 43. Residues histidine 63, glutamate 64, cysteine 93, cysteine 96, cysteine 99, and cysteine 107 each contribute to the Zn(2+) site. NAD(+) is bound by residues isoleucine 176, aspartate 196, arginine 201, 263–265 (LGT), and 287–288 (VT).

The protein belongs to the zinc-containing alcohol dehydrogenase family. As to quaternary structure, homotetramer. It depends on Zn(2+) as a cofactor.

It is found in the cytoplasm. The catalysed reaction is L-threonine + NAD(+) = (2S)-2-amino-3-oxobutanoate + NADH + H(+). The protein operates within amino-acid degradation; L-threonine degradation via oxydo-reductase pathway; glycine from L-threonine: step 1/2. Its function is as follows. Catalyzes the NAD(+)-dependent oxidation of L-threonine to 2-amino-3-ketobutyrate. This chain is L-threonine 3-dehydrogenase, found in Cutibacterium acnes (strain DSM 16379 / KPA171202) (Propionibacterium acnes).